The following is a 224-amino-acid chain: ATP phosphoribosyltransferase (224 aa).

It belongs to the ATP phosphoribosyltransferase family. Short subfamily. In terms of assembly, heteromultimer composed of HisG and HisZ subunits.

The protein resides in the cytoplasm. The catalysed reaction is 1-(5-phospho-beta-D-ribosyl)-ATP + diphosphate = 5-phospho-alpha-D-ribose 1-diphosphate + ATP. It participates in amino-acid biosynthesis; L-histidine biosynthesis; L-histidine from 5-phospho-alpha-D-ribose 1-diphosphate: step 1/9. Its function is as follows. Catalyzes the condensation of ATP and 5-phosphoribose 1-diphosphate to form N'-(5'-phosphoribosyl)-ATP (PR-ATP). Has a crucial role in the pathway because the rate of histidine biosynthesis seems to be controlled primarily by regulation of HisG enzymatic activity. This chain is ATP phosphoribosyltransferase, found in Cupriavidus pinatubonensis (strain JMP 134 / LMG 1197) (Cupriavidus necator (strain JMP 134)).